A 353-amino-acid polypeptide reads, in one-letter code: Mitochondrial ubiquitin ligase activator of nfkb 1 (353 aa).

Over 1 to 8 (MENGGRPS) the chain is Cytoplasmic. Residues 9–29 (VGQVILLTTSSAITALFYSIY) form a helical membrane-spanning segment. The Mitochondrial intermembrane segment spans residues 30–239 (RHKYRSVQTL…LLEKQEVQMR (210 aa)). A helical transmembrane segment spans residues 240–260 (WWRILSIVFGVASCITLFFIL). At 261–353 (RRKYRHYKEK…IDRIVPLYNS (93 aa)) the chain is on the cytoplasmic side. The RING-type zinc-finger motif lies at 303–341 (CSICLSTEKSCVFLECGHVCSCISCYQALPSPKKCPICR).

Homooligomer.

It localises to the mitochondrion outer membrane. The catalysed reaction is S-ubiquitinyl-[E2 ubiquitin-conjugating enzyme]-L-cysteine + [acceptor protein]-L-lysine = [E2 ubiquitin-conjugating enzyme]-L-cysteine + N(6)-ubiquitinyl-[acceptor protein]-L-lysine.. The protein operates within protein modification; protein ubiquitination. E3 ubiquitin-protein ligase that plays a role in the control of mitochondrial morphology. Promotes mitochondrial fragmentation and influences mitochondrial localization. Inhibits cell growth. E3 ubiquitin ligases accept ubiquitin from an E2 ubiquitin-conjugating enzyme in the form of a thioester and then directly transfer the ubiquitin to targeted substrates. The polypeptide is Mitochondrial ubiquitin ligase activator of nfkb 1 (mul1) (Xenopus laevis (African clawed frog)).